Consider the following 854-residue polypeptide: DNA mismatch repair protein MutS (854 aa).

Residue 615–622 participates in ATP binding; sequence GPNMGGKS.

It belongs to the DNA mismatch repair MutS family.

In terms of biological role, this protein is involved in the repair of mismatches in DNA. It is possible that it carries out the mismatch recognition step. This protein has a weak ATPase activity. This is DNA mismatch repair protein MutS from Aliivibrio fischeri (strain ATCC 700601 / ES114) (Vibrio fischeri).